Consider the following 256-residue polypeptide: Ubiquinone biosynthesis O-methyltransferase (256 aa).

Residues Arg-44, Gly-80, Asp-101, and Met-144 each coordinate S-adenosyl-L-methionine.

It belongs to the methyltransferase superfamily. UbiG/COQ3 family.

The catalysed reaction is a 3-demethylubiquinol + S-adenosyl-L-methionine = a ubiquinol + S-adenosyl-L-homocysteine + H(+). It carries out the reaction a 3-(all-trans-polyprenyl)benzene-1,2-diol + S-adenosyl-L-methionine = a 2-methoxy-6-(all-trans-polyprenyl)phenol + S-adenosyl-L-homocysteine + H(+). It participates in cofactor biosynthesis; ubiquinone biosynthesis. Its function is as follows. O-methyltransferase that catalyzes the 2 O-methylation steps in the ubiquinone biosynthetic pathway. The sequence is that of Ubiquinone biosynthesis O-methyltransferase from Methylocella silvestris (strain DSM 15510 / CIP 108128 / LMG 27833 / NCIMB 13906 / BL2).